The following is a 226-amino-acid chain: 3-dehydroquinate dehydratase (226 aa).

3-dehydroquinate is bound by residues 29-31 (EFR) and Arg56. His120 (proton donor/acceptor) is an active-site residue. Lys146 (schiff-base intermediate with substrate) is an active-site residue. 3-dehydroquinate-binding residues include Arg187, Thr208, and Gln212.

This sequence belongs to the type-I 3-dehydroquinase family. In terms of assembly, homodimer.

The enzyme catalyses 3-dehydroquinate = 3-dehydroshikimate + H2O. It functions in the pathway metabolic intermediate biosynthesis; chorismate biosynthesis; chorismate from D-erythrose 4-phosphate and phosphoenolpyruvate: step 3/7. Functionally, involved in the third step of the chorismate pathway, which leads to the biosynthesis of aromatic amino acids. Catalyzes the cis-dehydration of 3-dehydroquinate (DHQ) and introduces the first double bond of the aromatic ring to yield 3-dehydroshikimate. The sequence is that of 3-dehydroquinate dehydratase from Halobacterium salinarum (strain ATCC 700922 / JCM 11081 / NRC-1) (Halobacterium halobium).